Consider the following 126-residue polypeptide: Glycerol dehydrogenase small subunit (126 aa).

Transmembrane regions (helical) follow at residues 13-33, 41-61, 67-87, and 92-112; these read WLTL…VIGG, GSTY…FMLM, AFLY…EVGF, and LLPR…TIPV.

The protein localises to the cell membrane. It catalyses the reaction glycerol + A = dihydroxyacetone + AH2. In terms of biological role, catalyzes the oxidation of glycerol to glycerone. Also acts, more slowly, on a number of other polyols including D-sorbitol, D-arabinitol, D-mannitol, meso-erythritol, adonitol and propylene glycol. This Gluconobacter thailandicus protein is Glycerol dehydrogenase small subunit (sldB).